Consider the following 157-residue polypeptide: Crossover junction endodeoxyribonuclease RuvC (157 aa).

Residues aspartate 7, glutamate 67, and aspartate 140 contribute to the active site. Aspartate 7, glutamate 67, and aspartate 140 together coordinate Mg(2+).

The protein belongs to the RuvC family. Homodimer which binds Holliday junction (HJ) DNA. The HJ becomes 2-fold symmetrical on binding to RuvC with unstacked arms; it has a different conformation from HJ DNA in complex with RuvA. In the full resolvosome a probable DNA-RuvA(4)-RuvB(12)-RuvC(2) complex forms which resolves the HJ. Requires Mg(2+) as cofactor.

Its subcellular location is the cytoplasm. The catalysed reaction is Endonucleolytic cleavage at a junction such as a reciprocal single-stranded crossover between two homologous DNA duplexes (Holliday junction).. The RuvA-RuvB-RuvC complex processes Holliday junction (HJ) DNA during genetic recombination and DNA repair. Endonuclease that resolves HJ intermediates. Cleaves cruciform DNA by making single-stranded nicks across the HJ at symmetrical positions within the homologous arms, yielding a 5'-phosphate and a 3'-hydroxyl group; requires a central core of homology in the junction. The consensus cleavage sequence is 5'-(A/T)TT(C/G)-3'. Cleavage occurs on the 3'-side of the TT dinucleotide at the point of strand exchange. HJ branch migration catalyzed by RuvA-RuvB allows RuvC to scan DNA until it finds its consensus sequence, where it cleaves and resolves the cruciform DNA. The chain is Crossover junction endodeoxyribonuclease RuvC from Rickettsia akari (strain Hartford).